A 148-amino-acid polypeptide reads, in one-letter code: uncharacterized protein (148 aa).

The span at 1–17 (MCPPVRQRPAQAPPAKR) shows a compositional bias: low complexity. Disordered regions lie at residues 1-86 (MCPP…VQSP) and 122-148 (RAHR…TSPC). Over residues 38-57 (RPPKMQRRPRPPVAKRRRFP) the composition is skewed to basic residues. Positions 134–148 (QSRQRPSPDSQTSPC) are enriched in polar residues.

It belongs to the Epstein-Barr virus BLLF2 family.

This is an uncharacterized protein from Homo sapiens (Human).